Here is a 386-residue protein sequence, read N- to C-terminus: Zinc finger CCCH domain-containing protein 2 (386 aa).

2 consecutive C3H1-type zinc fingers follow at residues 116-143 (HYSG…HGVF) and 151-175 (RYRT…HTPD). Disordered stretches follow at residues 180-200 (LPAQ…ESYD) and 220-252 (SSPT…RRGS). Over residues 182 to 192 (AQQSSPRSVAS) the composition is skewed to polar residues. Low complexity predominate over residues 220–229 (SSPTSTLMSP). The span at 230 to 241 (PKSPPSESPPLS) shows a compositional bias: pro residues.

The protein resides in the nucleus. Involved in leaf senescence delay. May repress jasmonic acid (JA) signaling role in promoting leaf senescence. May regulate panicle development and pollination/fertilization process. The protein is Zinc finger CCCH domain-containing protein 2 of Oryza sativa subsp. japonica (Rice).